We begin with the raw amino-acid sequence, 339 residues long: Ketol-acid reductoisomerase (NADP(+)) (339 aa).

Residues 1-182 (MRVYYDRDAD…GGGRAGIIET (182 aa)) enclose the KARI N-terminal Rossmann domain. NADP(+) contacts are provided by residues 24–27 (YGSQ), Arg48, Ser51, Ser53, and 83–86 (DELQ). Residue His108 is part of the active site. An NADP(+)-binding site is contributed by Gly134. The KARI C-terminal knotted domain occupies 183–328 (TFKEECETDL…ERLRAMMPWI (146 aa)). 4 residues coordinate Mg(2+): Asp191, Glu195, Glu227, and Glu231. Ser252 provides a ligand contact to substrate.

Belongs to the ketol-acid reductoisomerase family. The cofactor is Mg(2+).

It catalyses the reaction (2R)-2,3-dihydroxy-3-methylbutanoate + NADP(+) = (2S)-2-acetolactate + NADPH + H(+). The catalysed reaction is (2R,3R)-2,3-dihydroxy-3-methylpentanoate + NADP(+) = (S)-2-ethyl-2-hydroxy-3-oxobutanoate + NADPH + H(+). It functions in the pathway amino-acid biosynthesis; L-isoleucine biosynthesis; L-isoleucine from 2-oxobutanoate: step 2/4. The protein operates within amino-acid biosynthesis; L-valine biosynthesis; L-valine from pyruvate: step 2/4. Its function is as follows. Involved in the biosynthesis of branched-chain amino acids (BCAA). Catalyzes an alkyl-migration followed by a ketol-acid reduction of (S)-2-acetolactate (S2AL) to yield (R)-2,3-dihydroxy-isovalerate. In the isomerase reaction, S2AL is rearranged via a Mg-dependent methyl migration to produce 3-hydroxy-3-methyl-2-ketobutyrate (HMKB). In the reductase reaction, this 2-ketoacid undergoes a metal-dependent reduction by NADPH to yield (R)-2,3-dihydroxy-isovalerate. In Methylobacterium nodulans (strain LMG 21967 / CNCM I-2342 / ORS 2060), this protein is Ketol-acid reductoisomerase (NADP(+)).